We begin with the raw amino-acid sequence, 396 residues long: Probable sugar efflux transporter (396 aa).

The next 12 helical transmembrane spans lie at 15–35 (VVTLAVAAFIFNTTEFVPVGL), 50–70 (VGIMLTIYAWVVALMSLPFML), 81–101 (LICLFVVFIASHVLSFLSWSF), 103–123 (VLVISRIGVAFAHAIFWSITA), 136–156 (AQALSLIATGTALAMVLGLPL), 170–190 (FFAIGIGALITLLCLIKLLPL), 209–229 (PALMSIYLLTVVVVTAHYTAY), 246–266 (FATALLLLLGGAGIIGSVIFG), 275–295 (ALVSTAIALLLVCLALLLPAA), 299–319 (IHLGVLSIFWGIAMMLIGLGM), 333–353 (VAMALFSGIFNIGIGAGALVG), and 364–384 (MIGYVGAVPAFAALIWSIIIF).

The protein belongs to the major facilitator superfamily. SotB (TC 2.A.1.2) family.

The protein localises to the cell inner membrane. Functionally, involved in the efflux of sugars. The physiological role may be the reduction of the intracellular concentration of toxic sugars or sugar metabolites. The sequence is that of Probable sugar efflux transporter from Shigella boydii serotype 18 (strain CDC 3083-94 / BS512).